Here is a 141-residue protein sequence, read N- to C-terminus: Small ribosomal subunit protein bS6 (141 aa).

The interval 110–141 (SRTKVSDQPAAVEAAEAPAAPAAQEESAPASA) is disordered. The span at 117–141 (QPAAVEAAEAPAAPAAQEESAPASA) shows a compositional bias: low complexity.

This sequence belongs to the bacterial ribosomal protein bS6 family.

Functionally, binds together with bS18 to 16S ribosomal RNA. The chain is Small ribosomal subunit protein bS6 from Acidobacterium capsulatum (strain ATCC 51196 / DSM 11244 / BCRC 80197 / JCM 7670 / NBRC 15755 / NCIMB 13165 / 161).